Reading from the N-terminus, the 478-residue chain is tRNA modification GTPase MnmE (478 aa).

Residues R36, E94, and K133 each contribute to the (6S)-5-formyl-5,6,7,8-tetrahydrofolate site. The region spanning 230–402 is the TrmE-type G domain; it reads GIHVVLAGRP…LVETLCAKVG (173 aa). N240 contacts K(+). GTP is bound by residues 240–245, 259–265, and 284–287; these read NAGKSS, TDVAGTT, and DTAG. A Mg(2+)-binding site is contributed by S244. Residues T259, V261, and T264 each coordinate K(+). T265 lines the Mg(2+) pocket. K478 is a binding site for (6S)-5-formyl-5,6,7,8-tetrahydrofolate.

It belongs to the TRAFAC class TrmE-Era-EngA-EngB-Septin-like GTPase superfamily. TrmE GTPase family. Homodimer. Heterotetramer of two MnmE and two MnmG subunits. The cofactor is K(+).

Its subcellular location is the cytoplasm. Exhibits a very high intrinsic GTPase hydrolysis rate. Involved in the addition of a carboxymethylaminomethyl (cmnm) group at the wobble position (U34) of certain tRNAs, forming tRNA-cmnm(5)s(2)U34. This Psychrobacter cryohalolentis (strain ATCC BAA-1226 / DSM 17306 / VKM B-2378 / K5) protein is tRNA modification GTPase MnmE.